We begin with the raw amino-acid sequence, 226 residues long: Thiamine-phosphate synthase (226 aa).

Residues 46 to 50 and Asp83 each bind 4-amino-2-methyl-5-(diphosphooxymethyl)pyrimidine; that span reads QFRDK. Mg(2+) contacts are provided by Asp84 and Asp103. Ser122 lines the 4-amino-2-methyl-5-(diphosphooxymethyl)pyrimidine pocket. 2-[(2R,5Z)-2-carboxy-4-methylthiazol-5(2H)-ylidene]ethyl phosphate is bound at residue 149 to 151; sequence TQS. Lys152 contributes to the 4-amino-2-methyl-5-(diphosphooxymethyl)pyrimidine binding site. 2-[(2R,5Z)-2-carboxy-4-methylthiazol-5(2H)-ylidene]ethyl phosphate contacts are provided by residues Gly181 and 201 to 202; that span reads IT.

Belongs to the thiamine-phosphate synthase family. The cofactor is Mg(2+).

It carries out the reaction 2-[(2R,5Z)-2-carboxy-4-methylthiazol-5(2H)-ylidene]ethyl phosphate + 4-amino-2-methyl-5-(diphosphooxymethyl)pyrimidine + 2 H(+) = thiamine phosphate + CO2 + diphosphate. The enzyme catalyses 2-(2-carboxy-4-methylthiazol-5-yl)ethyl phosphate + 4-amino-2-methyl-5-(diphosphooxymethyl)pyrimidine + 2 H(+) = thiamine phosphate + CO2 + diphosphate. It catalyses the reaction 4-methyl-5-(2-phosphooxyethyl)-thiazole + 4-amino-2-methyl-5-(diphosphooxymethyl)pyrimidine + H(+) = thiamine phosphate + diphosphate. It participates in cofactor biosynthesis; thiamine diphosphate biosynthesis; thiamine phosphate from 4-amino-2-methyl-5-diphosphomethylpyrimidine and 4-methyl-5-(2-phosphoethyl)-thiazole: step 1/1. Condenses 4-methyl-5-(beta-hydroxyethyl)thiazole monophosphate (THZ-P) and 2-methyl-4-amino-5-hydroxymethyl pyrimidine pyrophosphate (HMP-PP) to form thiamine monophosphate (TMP). The protein is Thiamine-phosphate synthase of Haemophilus influenzae (strain ATCC 51907 / DSM 11121 / KW20 / Rd).